The sequence spans 349 residues: Ion-translocating oxidoreductase complex subunit D (349 aa).

The next 3 membrane-spanning stretches (helical) occupy residues 36–56 (CAFFGWGTLIQVLLAIIVALS), 77–99 (SAMLTAILIGVAIPPLAPWWMIV), and 124–144 (AMAAYVLLLVSFPVQMTSWIA). Threonine 185 bears the FMN phosphoryl threonine mark. 5 helical membrane passes run 212–232 (GTGVGWFWVNLAYLAGGLVLL), 239–259 (WHISTGVLAGLFVASSIGFLL), 265–285 (ASPLFHLFSGATMLAAFFIAT), 291–311 (ATSPRGRLIFGALIGVLVYVI), and 315–335 (GGYPDAFAFAVLLANLCAPFI).

It belongs to the NqrB/RnfD family. As to quaternary structure, the complex is composed of six subunits: RnfA, RnfB, RnfC, RnfD, RnfE and RnfG. Requires FMN as cofactor.

It is found in the cell inner membrane. Part of a membrane-bound complex that couples electron transfer with translocation of ions across the membrane. The sequence is that of Ion-translocating oxidoreductase complex subunit D from Shewanella sp. (strain MR-4).